The following is a 745-amino-acid chain: Phosphoribosylformylglycinamidine synthase subunit PurL (745 aa).

H54 is an active-site residue. Residues Y57 and K96 each contribute to the ATP site. E98 lines the Mg(2+) pocket. Residues 99–102 (SHNH) and R121 contribute to the substrate site. Residue H100 is the Proton acceptor of the active site. D122 is a binding site for Mg(2+). Q250 is a binding site for substrate. D278 provides a ligand contact to Mg(2+). 322–324 (ESQ) serves as a coordination point for substrate. ATP is bound by residues D503 and G540. Residue N541 coordinates Mg(2+). S543 lines the substrate pocket.

The protein belongs to the FGAMS family. In terms of assembly, monomer. Part of the FGAM synthase complex composed of 1 PurL, 1 PurQ and 2 PurS subunits.

It localises to the cytoplasm. The catalysed reaction is N(2)-formyl-N(1)-(5-phospho-beta-D-ribosyl)glycinamide + L-glutamine + ATP + H2O = 2-formamido-N(1)-(5-O-phospho-beta-D-ribosyl)acetamidine + L-glutamate + ADP + phosphate + H(+). It participates in purine metabolism; IMP biosynthesis via de novo pathway; 5-amino-1-(5-phospho-D-ribosyl)imidazole from N(2)-formyl-N(1)-(5-phospho-D-ribosyl)glycinamide: step 1/2. Functionally, part of the phosphoribosylformylglycinamidine synthase complex involved in the purines biosynthetic pathway. Catalyzes the ATP-dependent conversion of formylglycinamide ribonucleotide (FGAR) and glutamine to yield formylglycinamidine ribonucleotide (FGAM) and glutamate. The FGAM synthase complex is composed of three subunits. PurQ produces an ammonia molecule by converting glutamine to glutamate. PurL transfers the ammonia molecule to FGAR to form FGAM in an ATP-dependent manner. PurS interacts with PurQ and PurL and is thought to assist in the transfer of the ammonia molecule from PurQ to PurL. The polypeptide is Phosphoribosylformylglycinamidine synthase subunit PurL (Helicobacter hepaticus (strain ATCC 51449 / 3B1)).